The primary structure comprises 358 residues: G-protein coupled receptor 62 (358 aa).

Residues 1 to 17 lie on the Extracellular side of the membrane; sequence MANGSGLSVTELAGSVG. A glycan (N-linked (GlcNAc...) asparagine) is linked at Asn3. A helical membrane pass occupies residues 18-38; it reads FILAVLVEVGAVLGNGTLLVV. The Cytoplasmic segment spans residues 39-53; it reads VLRTPDLQDAFYLAH. A helical transmembrane segment spans residues 54–74; it reads LCVVDLLAAASIMPLGLLAAP. Topologically, residues 75–89 are extracellular; sequence PGLGTVPLDPSSCRA. The helical transmembrane segment at 90 to 110 threads the bilayer; it reads ARFLSAALLPACTLGVAALGL. Topologically, residues 111–128 are cytoplasmic; it reads ARYRLIVHPLRPGARPAP. The helical transmembrane segment at 129 to 149 threads the bilayer; sequence ALVLTAVWSAAALLGALSLLG. Residues 150–176 lie on the Extracellular side of the membrane; it reads PPPAPPPAPARCSVLAGGLGPFRPLWA. Residues 177–197 form a helical membrane-spanning segment; the sequence is MLAFALPALLLLAAYGSIFLV. The Cytoplasmic portion of the chain corresponds to 198–234; that stretch reads ARRAALRPPRGTRPRSDSLDSRLSFLPPLRPRLLGGK. Residues 235-255 traverse the membrane as a helical segment; it reads AALAPALAVGQFAACWLPYGC. Residues 256 to 268 lie on the Extracellular side of the membrane; sequence ACLAPAARAAAAE. The helical transmembrane segment at 269-289 threads the bilayer; the sequence is ATVTWVAYSAFAAHPFLYGLL. Over 290 to 358 the chain is Cytoplasmic; it reads QRPVRLALGR…RQTPSVSEAT (69 aa). The segment at 334 to 358 is disordered; sequence VLGPSEAPEQARELARQTPSVSEAT.

It belongs to the G-protein coupled receptor 1 family. In terms of assembly, homodimer. Forms heterodimer with MTNR1B. Interacts with ARRB1 and ARRB2 in a spontaneous and agonist-independent manner; leading to the internalization of GPR62 in the endosomal compartment. Expressed in the brain and testes. Expressed widely, in the brain, including the cerebral cortex, cerebellum, hippocampus,thalamus and pituitary gland. In the testes, expressed specifically in the germ cells.

It is found in the cell membrane. The protein resides in the endosome membrane. Functionally, orphan G-protein coupled receptor. Constitutively activates the G(q/11)/inositol phosphate and the G(s)-alpha/cAMP signaling pathways. Has spontaneous activity for beta-arrestin recruitment. Shows a reciprocal regulatory interaction with the melatonin receptor MTNR1B most likely through receptor heteromerization. The polypeptide is G-protein coupled receptor 62 (Gpr62) (Mus musculus (Mouse)).